The sequence spans 162 residues: Gas vesicle protein I (162 aa).

Positions 1–162 (MTGKQHQKHE…AERQRGGADE (162 aa)) are disordered. 2 stretches are compositionally biased toward basic and acidic residues: residues 22–37 (INRD…QREK) and 47–64 (RQSE…HDTQ). Polar residues-rich tracts occupy residues 65 to 74 (SETQRGTQSK) and 81 to 110 (TGGT…SHST). Basic and acidic residues-rich tracts occupy residues 122–142 (ARER…EDKS) and 151–162 (PKAERQRGGADE).

The protein belongs to the gas vesicle GvpI family. In terms of assembly, gvpF to GvpM interact with each other in vitro, and may form multi-subunit complex(es). Interacts with GvpC and GvpO.

The protein localises to the gas vesicle. Proteins GvpF to GvpM might be involved in nucleating gas vesicle formation. A minor component of the gas vesicle. Gas vesicles are hollow, gas filled proteinaceous nanostructures found in some microorganisms. They allow positioning of halobacteria at the optimal depth for growth in the poorly aerated, shallow brine pools of their habitat. Its function is as follows. Expression of a 9.5 kb mc-vac DNA fragment containing 2 divergently transcribed regions (gvpD-gvpE-gvpF-gvpG-gvpH-gvpI-gvpJ-gvpK-gvpL-gvpM and gvpA-gvpC-gvpN-gvpO) allows H.volcanii to produce gas vesicles. The protein is Gas vesicle protein I of Haloferax mediterranei (strain ATCC 33500 / DSM 1411 / JCM 8866 / NBRC 14739 / NCIMB 2177 / R-4) (Halobacterium mediterranei).